We begin with the raw amino-acid sequence, 76 residues long: Small proline-rich protein 2F (76 aa).

Repeat copies occupy residues 21-29, 30-38, and 39-47. The tract at residues 21 to 47 is 3 X 9 AA approximate tandem repeats; that stretch reads PKCPEPCSPSVCPEPCPPPKCPEPCPE. Residues 53 to 76 form a disordered region; it reads SFQQKCPPVQPPPPCQQKCPPKSK.

This sequence belongs to the cornifin (SPRR) family. As to expression, expressed in uterus.

It localises to the cytoplasm. Its function is as follows. Cross-linked envelope protein of keratinocytes. It is a keratinocyte protein that first appears in the cell cytosol, but ultimately becomes cross-linked to membrane proteins by transglutaminase. All that results in the formation of an insoluble envelope beneath the plasma membrane. The sequence is that of Small proline-rich protein 2F (Sprr2f) from Mus musculus (Mouse).